We begin with the raw amino-acid sequence, 88 residues long: Small ribosomal subunit protein bS20 (88 aa).

It belongs to the bacterial ribosomal protein bS20 family.

Its function is as follows. Binds directly to 16S ribosomal RNA. This is Small ribosomal subunit protein bS20 from Renibacterium salmoninarum (strain ATCC 33209 / DSM 20767 / JCM 11484 / NBRC 15589 / NCIMB 2235).